Here is a 228-residue protein sequence, read N- to C-terminus: Leucyl/phenylalanyl-tRNA--protein transferase (228 aa).

It belongs to the L/F-transferase family.

It is found in the cytoplasm. It catalyses the reaction N-terminal L-lysyl-[protein] + L-leucyl-tRNA(Leu) = N-terminal L-leucyl-L-lysyl-[protein] + tRNA(Leu) + H(+). It carries out the reaction N-terminal L-arginyl-[protein] + L-leucyl-tRNA(Leu) = N-terminal L-leucyl-L-arginyl-[protein] + tRNA(Leu) + H(+). The enzyme catalyses L-phenylalanyl-tRNA(Phe) + an N-terminal L-alpha-aminoacyl-[protein] = an N-terminal L-phenylalanyl-L-alpha-aminoacyl-[protein] + tRNA(Phe). Functions in the N-end rule pathway of protein degradation where it conjugates Leu, Phe and, less efficiently, Met from aminoacyl-tRNAs to the N-termini of proteins containing an N-terminal arginine or lysine. This is Leucyl/phenylalanyl-tRNA--protein transferase from Lawsonia intracellularis (strain PHE/MN1-00).